The sequence spans 331 residues: Phosphoribosylformylglycinamidine cyclo-ligase (331 aa).

This sequence belongs to the AIR synthase family.

The protein resides in the cytoplasm. It carries out the reaction 2-formamido-N(1)-(5-O-phospho-beta-D-ribosyl)acetamidine + ATP = 5-amino-1-(5-phospho-beta-D-ribosyl)imidazole + ADP + phosphate + H(+). It participates in purine metabolism; IMP biosynthesis via de novo pathway; 5-amino-1-(5-phospho-D-ribosyl)imidazole from N(2)-formyl-N(1)-(5-phospho-D-ribosyl)glycinamide: step 2/2. The chain is Phosphoribosylformylglycinamidine cyclo-ligase from Clostridium novyi (strain NT).